The following is a 162-amino-acid chain: Transcription elongation factor GreA (162 aa).

The stretch at 45–74 forms a coiled coil; sequence ENAEYEAAREKQAFIEGRIKELEDMTARAE.

This sequence belongs to the GreA/GreB family.

In terms of biological role, necessary for efficient RNA polymerase transcription elongation past template-encoded arresting sites. The arresting sites in DNA have the property of trapping a certain fraction of elongating RNA polymerases that pass through, resulting in locked ternary complexes. Cleavage of the nascent transcript by cleavage factors such as GreA or GreB allows the resumption of elongation from the new 3'terminus. GreA releases sequences of 2 to 3 nucleotides. This is Transcription elongation factor GreA from Rickettsia conorii (strain ATCC VR-613 / Malish 7).